The primary structure comprises 279 residues: uncharacterized protein (279 aa).

Residues 233 to 279 are disordered; it reads NDHQLHDSPLCSDVSDSTSNNNYDESLNFSNDNNNSSFNDFDDDNFI. Residues 246 to 259 show a composition bias toward polar residues; sequence VSDSTSNNNYDESL. The segment covering 260–271 has biased composition (low complexity); sequence NFSNDNNNSSFN.

This is an uncharacterized protein from Buchnera aphidicola subsp. Baizongia pistaciae (strain Bp).